A 718-amino-acid chain; its full sequence is NF-kappa-B inhibitor zeta (718 aa).

A compositionally biased stretch (basic and acidic residues) spans 1–17 (MIVDKLLDDSRGGEGLR). Disordered regions lie at residues 1 to 20 (MIVD…RDAA) and 58 to 108 (SAPG…RQQR). Residues 58-83 (SAPGSPGSDSSDFSSASSVSSCGAVE) show a composition bias toward low complexity. Basic and acidic residues predominate over residues 84–97 (SRSRGGARAERQPV). Residues 108–130 (RGPFQGVRVKNSVKELLLHIRSH) form the OCA domain. Positions 164–179 (KRKGPDSLSDGPACKR) match the Nuclear localization signal motif. Positions 186-211 (QFLTPPQTPTPGESMEDVHLNEPKQE) are disordered. Positions 201-211 (EDVHLNEPKQE) are enriched in basic and acidic residues. A required for transcriptional activity region spans residues 321–394 (AYEPNLFDGP…MVGHEMASDS (74 aa)). An interaction with NFKB1/p50 region spans residues 404–718 (MGNPMNTTQL…KSIQQRAPPY (315 aa)). 7 ANK repeats span residues 443–472 (DGDT…ALHM), 479–508 (NGQS…QVNT), 512–541 (WGRT…GSNQ), 551–580 (DGLT…HSPE), 582–607 (QELL…AVEA), 612–641 (SGRT…CLSF), and 648–681 (NGNT…DPST).

Interacts with NFKB1/p50. Interacts with RELA. Interacts with AKIRIN2. As to expression, expressed at high levels in peripheral blood leukocytes and lung, at moderate levels in liver, placenta, and at low levels in spleen, kidney, skeletal muscle and heart.

The protein resides in the nucleus. Functionally, involved in regulation of NF-kappa-B transcription factor complexes. Inhibits NF-kappa-B activity without affecting its nuclear translocation upon stimulation. Inhibits DNA-binding of RELA and NFKB1/p50, and of the NF-kappa-B p65-p50 heterodimer and the NF-kappa-B p50-p50 homodimer. Also seems to activate NF-kappa-B-mediated transcription. In vitro, upon association with NFKB1/p50 has transcriptional activation activity and, together with NFKB1/p50 and RELA, is recruited to LCN2 promoters. Promotes transcription of LCN2 and DEFB4. Is recruited to IL-6 promoters and activates IL-6 but decreases TNF-alpha production in response to LPS. Seems to be involved in the induction of inflammatory genes activated through TLR/IL-1 receptor signaling. Involved in the induction of T helper 17 cells (Th17) differentiation upon recognition of antigen by T cell antigen receptor (TCR). The chain is NF-kappa-B inhibitor zeta (NFKBIZ) from Homo sapiens (Human).